A 333-amino-acid polypeptide reads, in one-letter code: Ig gamma-2B chain C region (333 aa).

3 consecutive Ig-like domains span residues 6-96, 124-223, and 232-328; these read PSVY…KKVE, PSVF…KTIS, and PQVY…KSIS. 3 disulfide bridges follow: Cys27/Cys80, Cys147/Cys207, and Cys253/Cys311.

This is Ig gamma-2B chain C region (Igh-1a) from Rattus norvegicus (Rat).